Consider the following 500-residue polypeptide: MSSIQNKTDVILIGAGIMSATLGSLLKELKPEWEIKVFEKLANAGEESSNEWNNAGTGHAALCELNYTAEKSDGTIDISKAVKINEQFQISRQFWAYLVSQNLISNPQDFIMPIPHMSLVQGEDNVAYLKKRFKALSNIPLFEGMEFSNDPEKLKEWIPLVMEGRTSNEPIAATKIDSGTDVNFGALTRMLFEHLKEQNVEVHYKHSVKDIKRTSDGSWSVKVQEIESGTIEYHTANFVFIGGGGGSLPLLQKTGIPESKNIGGFPVSGLFMVCNNPEVVEQHHAKVYGKAKVGAPPMSVPHLDTRYIDNKKSLLFGPFAGFSPKFLKTGSNFDLIGSVKPYNVFTMLAAGAKEMSLTKYLIQQVMLSKEKRMAELREFMPNAKSEDWDIVVAGQRVQVIKDTEAGGKGTLQFGTEVVSSADGSIAALLGASPGASTAVHVMLEVLEKCFPHHMLEWQPKIKEMIPSYGVSLAENRELFQEIHQSTAEALGLSEKELVHS.

This sequence belongs to the MQO family. FAD serves as cofactor.

The enzyme catalyses (S)-malate + a quinone = a quinol + oxaloacetate. The protein operates within carbohydrate metabolism; tricarboxylic acid cycle; oxaloacetate from (S)-malate (quinone route): step 1/1. The protein is Probable malate:quinone oxidoreductase of Halalkalibacterium halodurans (strain ATCC BAA-125 / DSM 18197 / FERM 7344 / JCM 9153 / C-125) (Bacillus halodurans).